A 282-amino-acid chain; its full sequence is Protein FRG2-like-2 (282 aa).

Positions 1-10 (MGKGNEDPDL) are enriched in basic and acidic residues. Disordered regions lie at residues 1-96 (MGKG…QENC) and 249-282 (GPGDSALDREAHPFPGQEITEPVSGSDEAKLGAP). Polar residues-rich tracts occupy residues 13-31 (SSIQCSTDQPPFQQISFTE), 58-68 (RQAGSDPNPNK), and 79-94 (GNSTAGSEPESSSYQE).

Belongs to the FRG2 family.

The protein resides in the nucleus. The polypeptide is Protein FRG2-like-2 (FRG2C) (Homo sapiens (Human)).